The sequence spans 328 residues: Eukaryotic translation initiation factor 3 subunit I (328 aa).

WD repeat units lie at residues 8–47, 50–91, 148–187, 190–229, and 287–328; these read GHERAITQIKYNREGDLIFSTAKDHKPSVWFSLNGERLGT, GHQG…GTIP, SIQTKITSMLWGALDETVITGHENGSIRIWDLRTAKELNS, DHTGVINDMQLSADGTMLVSASKDTTAKLFDSESLMCLKT, and GHFG…FVFE.

It belongs to the eIF-3 subunit I family. Component of the eukaryotic translation initiation factor 3 (eIF-3) complex.

It is found in the cytoplasm. Component of the eukaryotic translation initiation factor 3 (eIF-3) complex, which is involved in protein synthesis of a specialized repertoire of mRNAs and, together with other initiation factors, stimulates binding of mRNA and methionyl-tRNAi to the 40S ribosome. The eIF-3 complex specifically targets and initiates translation of a subset of mRNAs involved in cell proliferation. In Culex quinquefasciatus (Southern house mosquito), this protein is Eukaryotic translation initiation factor 3 subunit I.